A 159-amino-acid chain; its full sequence is MQSKEDFIEMRVPASAEYVSLIRLTLSGVFSRAGATYDDIEDAKIAVSEAVTNAVKHAYKEKNNVGIINIYFEILEDKIKIVISDKGDSFDYETTKSKIGPYDKDENIDFLREGGLGLFLIESLMDEVTVYKESGVTISMTKYIKKEQVRNNGERVEIS.

It belongs to the anti-sigma-factor family.

It catalyses the reaction L-seryl-[protein] + ATP = O-phospho-L-seryl-[protein] + ADP + H(+). The enzyme catalyses L-threonyl-[protein] + ATP = O-phospho-L-threonyl-[protein] + ADP + H(+). Functionally, negative regulator of sigma-B activity. Phosphorylates and inactivates its specific antagonist protein, RsbV. Upon phosphorylation of RsbV, RsbW is released and binds to sigma-B, thereby blocking its ability to form an RNA polymerase holoenzyme (E-sigma-B). The protein is Serine-protein kinase RsbW of Staphylococcus aureus (strain MRSA252).